Here is a 301-residue protein sequence, read N- to C-terminus: Probable 2-(5''-triphosphoribosyl)-3'-dephosphocoenzyme-A synthase (301 aa).

This sequence belongs to the CitG/MdcB family.

The enzyme catalyses 3'-dephospho-CoA + ATP = 2'-(5''-triphospho-alpha-D-ribosyl)-3'-dephospho-CoA + adenine. This chain is Probable 2-(5''-triphosphoribosyl)-3'-dephosphocoenzyme-A synthase, found in Pectobacterium carotovorum subsp. carotovorum (strain PC1).